The chain runs to 217 residues: Guanylate kinase (217 aa).

Residues 10–190 enclose the Guanylate kinase-like domain; that stretch reads GLLIILSSPS…TEEALKTIIT (181 aa). Residue 17 to 24 coordinates ATP; it reads SPSGAGKS.

Belongs to the guanylate kinase family.

The protein localises to the cytoplasm. It carries out the reaction GMP + ATP = GDP + ADP. In terms of biological role, essential for recycling GMP and indirectly, cGMP. The chain is Guanylate kinase from Ruegeria sp. (strain TM1040) (Silicibacter sp.).